Reading from the N-terminus, the 247-residue chain is uncharacterized protein (247 aa).

The N-terminal stretch at 1 to 35 is a signal peptide; that stretch reads MWGPGVTAEGLSVAPAPPPLLPLLLLLALALVAPS. Asparagine 57 is a glycosylation site (N-linked (GlcNAc...) asparagine). The chain crosses the membrane as a helical span at residues 82–102; it reads LSGLLILLVLFAIGYFLQRII. Residues 109 to 179 are disordered; sequence YPRGQARPGQ…GGRSDPSCAS (71 aa). A compositionally biased stretch (gly residues) spans 160–172; sequence SGGGGRGRGGGGR.

It is found in the membrane. This is an uncharacterized protein from Homo sapiens (Human).